The primary structure comprises 621 residues: Cyclic nucleotide-gated ion channel 11 (621 aa).

Topologically, residues 1-43 are cytoplasmic; it reads MNLQRRKFVRLDSTGVDGKLKSVRGRLKKVYGKMKTLENWRKT. Residues 44 to 64 form a helical membrane-spanning segment; it reads VLLACVVALAIDPLFLFIPLI. Topologically, residues 65 to 76 are extracellular; it reads DSQRFCFTFDKT. A helical transmembrane segment spans residues 77-97; it reads LVAVVCVIRTFIDTFYVIHII. The Cytoplasmic segment spans residues 98 to 128; sequence YYLITETIAPRSQASLRGEIVVHSKATLKTR. The helical transmembrane segment at 129-149 threads the bilayer; it reads LLFHFIVDIISVLPIPQVVVL. The Extracellular segment spans residues 150–162; it reads TLIPLSASLVSER. A helical transmembrane segment spans residues 163–183; the sequence is ILKWIILSQYVPRIIRMYPLY. At 184–198 the chain is on the cytoplasmic side; sequence KEVTRAFGTVAESKR. Residues 199–219 form a helical membrane-spanning segment; sequence VGAALNFFLYMLHSYVCGAFW. The Extracellular segment spans residues 220–329; it reads YLSSIERKST…QNLETSNSAG (110 aa). The chain crosses the membrane as a helical span at residues 330 to 350; sequence EIFFAIIICVSGLLLFAVLIG. At 351-621 the chain is on the cytoplasmic side; that stretch reads NVQKYLQSST…KLNLGAAIYA (271 aa). A nucleoside 3',5'-cyclic phosphate-binding positions include 435-556 and Asp-506; that span reads LLQA…HSKQ. Residues 549–564 form a calmodulin-binding region; that stretch reads YRRLHSKQLQHMFRFY. Residues 569–598 enclose the IQ domain; it reads QTWAACFIQAAWKRHCRRKLSKALREEEGK.

The protein belongs to the cyclic nucleotide-gated cation channel (TC 1.A.1.5) family. Homotetramer or heterotetramer.

The protein localises to the cell membrane. Putative cyclic nucleotide-gated ion channel. In Arabidopsis thaliana (Mouse-ear cress), this protein is Cyclic nucleotide-gated ion channel 11 (CNGC11).